Reading from the N-terminus, the 398-residue chain is Acetate kinase (398 aa).

Asn-8 contributes to the Mg(2+) binding site. Lys-15 contacts ATP. Arg-89 is a binding site for substrate. The active-site Proton donor/acceptor is Asp-146. ATP is bound by residues 206-210 (HIGNG), 283-285 (DMR), and 331-335 (GMGEN). Glu-383 is a Mg(2+) binding site.

It belongs to the acetokinase family. As to quaternary structure, homodimer. Mg(2+) serves as cofactor. Mn(2+) is required as a cofactor.

Its subcellular location is the cytoplasm. The enzyme catalyses acetate + ATP = acetyl phosphate + ADP. It functions in the pathway metabolic intermediate biosynthesis; acetyl-CoA biosynthesis; acetyl-CoA from acetate: step 1/2. Functionally, catalyzes the formation of acetyl phosphate from acetate and ATP. Can also catalyze the reverse reaction. The sequence is that of Acetate kinase from Streptococcus pyogenes serotype M4 (strain MGAS10750).